Reading from the N-terminus, the 2134-residue chain is MSKLFSTVGKTVDEVLSVLNDENTESYAGPDRTAVVGGGFLTTVDQSSVSTATMGSLQDVQYRTAVDIPGSRVTQGERFFLIDQREWNSTQSEWQLLGKIDIVKELLDQSYAVDGLLKYHSYARFGLDVIVQINPTSFQAGGLIAALVPYDQVDIESIAAMTTYCHGKLNCNINNVVRMKVPYIYSRGCYNLRNSAYSIWMLVIRVWSQLQLGSGTSTQITVTTLARFVDLELHGLSPLVAQMMRNEFRLSSSSNIVNLANYEDARAKVSLALGQEEFSRDSSSTGGELLHHFSQWTSIPCLAFTFTFPGTVGPGTQIWSTTVDPFSCNLRASSTVHPTNLSSIAGMFCFWRGDIVFEFQVFCTKYHSGRLMFVYVPGDENTKISTLTAKQASSGLTAVFDINGVNSTLVFRCPFISDTPYRVNPTTHKSLWPYATGKLVCYVYNRLNAPASVSPSVSINVYKSAVDLELYAPVYGVSPTNTSVFAQGKEDEGGFSSVPEVEQHVVEDKEPQGPLHVTPFGAVKAMEDPQLARKTPGTFPELAPGKPRHTVDHMDLYKFMGRAHYLWGHKFTKTDMQYTFQIPLSPIKEGFVTGTLRWFLSLFQLYRGSLDITMTFAGKTNVDGIVYFVPEGVAIETEREEQTPLLTLNYKTSVGAIRFNTGQTTNVQFRIPFYTPLEHIATHSKNAMDSVLGAITTQITNYSAQDEYLQVTYYISFNEDSQFSVPRAVPVVSSFTDTSSKTVMNTYWLDDDELVEESSHSSFDEIEEAQCSKCKMDLGDIVSCSGEKAKHFGVYVGDGVVHVDPEGNATNWFMKRKATVKKSKNLDKWCFALSPRIDRTLICETANLMVGREVEYDIFVKNCETYARGIASGDYGTKEGEKWKTLLSAVGVAAMTTTMMAMRHELLDTSLTKLPQKVGEVTNEVRKILEDTSAGVREFKEKVSSILRKTWPGKTSIKIMKWTCRIVKMCVGVGLCYAHGWDSKTVTAVVTMFSMDFLDLVIDGIEIGRMIIDELTTPKAQGLSEINQVLSIAKNAKDVIKMLIEIFCKVIERITGEHGKKIQWAQDKKEEIMNVLERAEKWITTSDDHSEGIECLKLVRSIQSVIRGEESLKELAGELRAVGTHVLNKLGRLDKPNAPILVRAEPTVLYLYGNRGGGKSLASMAIAVKLCKELGISHVEGIYTKPIMSDFWDGYAGQPVVIMDDLGQSTSDEDWTNFCQLVSSCPLRLNMANLEKKGTQFNSPFIIASSNLSHPCPKTVYCTDAIARRLHIKVKVSPKEEFSTHAMLDVAKAKKAGAYCNLDCLDFQKISDLASTPVSVQDIVLEMLHTNVDKQTLMGDIIQYWAQSNPREVFDTMAEGKNSGKYLWLFEKIKTSKWYILGCVGAVLSVSVLGVFAYHMIKNHFRDQQHDQSAYSAAIKPLRVVRLEQSDAQSVVDISNVVHGNLVRVGVGPNEARIHWLYNGLGVYDTYILMPYHGIKDADVDDDLYIERAGTIYSTNMKMVQVLFLESREGDLVLINVPRLPKFRDIRNHFSTEENIRRAEGMPGTLCTLDHERFTLVTESDLKMVEAATYVCEDDKGVRTDISVGRSWKAKACTVAGMCGGALVTSNNKMQNAIVGIHVAGGAHAISRVITKEMIEEMLKTRAQCSRIWKTEFVEEKISVGSKTKYHKSPLYDFCPQEVIKCPTKLFYQGEIDVMQVMLAKYSSPIVSEPLGYATVVEAYTNRMVSFFSEPRQLTYDECINGIEGLDAIDLKTSAGFPYNTLGLRKSDLIINGKMAQRLQQDVEKMEEDLHMNRSIQVVFTTCAKDELRPLSKVMLGKTRAIEACPVSFTILFRRYLGYALAQIQSHPGFHTGIAVGVDPDQDWHCMWYSIVTQCDLVVGLDFSNYDASLSPFMIYHAGRVLGQICGLDPRLVDRIMEPIVNSVHQLGSMRYYVHGSMPSGTPATSVLNSIINVVNICHVLCALEKISVFEVFKLFKILTYGDDVLLCIKKEYLDQKSFPLSSFVQGLEELGLSPTGADKMEVKVTPVHKMSFLKRTFYVDEWSICHPRISEETVYSMLAWKSDNASMKDLIETSIWFMFHHGPRKYVRFCTWLRGVLCRVGIGLYIPTYKELEVRYDRLVKYRFIDDSF.

Topologically, residues 1-1377 (MSKLFSTVGK…WLFEKIKTSK (1377 aa)) are cytoplasmic. An LRAT domain is found at 781–882 (IVSCSGEKAK…GDYGTKEGEK (102 aa)). Active-site residues include histidine 791 and histidine 802. Cysteine 863 functions as the Acyl-thioester intermediate in the catalytic mechanism. An SF3 helicase domain is found at 1127–1289 (LNKLGRLDKP…EEFSTHAMLD (163 aa)). 1153–1160 (GNRGGGKS) contacts ATP. The stretch at 1378 to 1392 (WYILGCVGAVLSVSV) is an intramembrane region. At 1393–2134 (LGVFAYHMIK…VKYRFIDDSF (742 aa)) the chain is on the cytoplasmic side. Tyrosine 1415 carries the post-translational modification O-(5'-phospho-RNA)-tyrosine. Residues 1431-1643 (DAQSVVDISN…ITKEMIEEML (213 aa)) form the Peptidase C3 domain. Active-site for protease 3C activity residues include histidine 1477, aspartate 1515, and cysteine 1603. Positions 1880–2001 (DLVVGLDFSN…CIKKEYLDQK (122 aa)) constitute a RdRp catalytic domain.

Belongs to the picornaviridae polyprotein family. Specific enzymatic cleavages by the viral protease in vivo yield a variety of precursors and mature proteins. During virion maturation, non-infectious particles are rendered infectious following cleavage of VP0. This maturation cleavage is followed by a conformational change of the particle. Post-translationally, VPg is uridylylated by the polymerase and is covalently linked to the 5'-end of genomic RNA. This uridylylated form acts as a nucleotide-peptide primer for the polymerase.

It is found in the virion. The protein localises to the host cytoplasm. Its subcellular location is the host cytoplasmic vesicle membrane. The catalysed reaction is RNA(n) + a ribonucleoside 5'-triphosphate = RNA(n+1) + diphosphate. The enzyme catalyses a ribonucleoside 5'-triphosphate + H2O = a ribonucleoside 5'-diphosphate + phosphate + H(+). It carries out the reaction Selective cleavage of Gln-|-Gly bond in the poliovirus polyprotein. In other picornavirus reactions Glu may be substituted for Gln, and Ser or Thr for Gly.. Its function is as follows. Capsid proteins VP1, VP2, and VP3 form a closed capsid enclosing the viral positive strand RNA genome. All these proteins contain a beta-sheet structure called beta-barrel jelly roll. Together they form an icosahedral capsid (T=3) composed of 60 copies of each VP1, VP2, and VP3, with a diameter of approximately 300 Angstroms. VP1 is situated at the 12 fivefold axes, whereas VP2 and VP3 are located at the quasi-sixfold axes. VP0 precursor is a component of immature procapsids. The N-terminal domain of VP0, protein VP4, is needed for the assembly of 12 pentamers into the icosahedral structure. Unlike other picornaviruses, AEV VP4 may not be myristoylated. In terms of biological role, protein 2B and 2BC precursor affect membrane integrity and cause an increase in membrane permeability. Functionally, associates with and induces structural rearrangements of intracellular membranes. It displays RNA-binding, nucleotide binding and NTPase activities. Its function is as follows. Protein 3A, via its hydrophobic domain, serves as membrane anchor. Protein 3B is covalently linked to the 5'-end of both the positive-strand and negative-strand genomic RNAs. It acts as a genome-linked replication primer. In terms of biological role, cysteine protease that generates mature viral proteins from the precursor polyprotein. In addition to its proteolytic activity, it binds to viral RNA, and thus influences viral genome replication. RNA and substrate bind cooperatively to the protease. Functionally, RNA-directed RNA polymerase 3D-POL replicates genomic and antigenomic RNA by recognizing replications specific signals. The chain is Genome polyprotein from Avian encephalomyelitis virus (strain Calnek vaccine) (AEV).